Here is a 922-residue protein sequence, read N- to C-terminus: MDYRNTLNLPETDFPMRGNLPQREPEILQKWEEEDIYATVQKARAGRPKFVLHDGPPYANGDIHLGHALNKVIKDIIVKYKTMAGFDAPYVPGWDTHGLPIEQQVIKKLGVNRHAVSVVEFRRMCKEYAKKYISIQKEQFKRLGVRGDWQNPYLTLEKEYEAAQIGVFGKMARKKYIYKGLKPVYWCPSCETALAEAEIEYAEKTSHAIYVKFPVKEGKGVLTDENTFVIIWTTTPWTLPANLAITLHEEFSYVQVQVEKEHWLVAEGMLESLRSLWNLELPVEKRFVGKELEGVICKHPFIERDSVLILGEHVTLEAGTGCVHTAPGHGEEDFNVGKKYGLPVLCPVDHQGKFTAEGGAYAGMKVDKANPVIIEDLKNLHALVHEDKIKHSYAHCWRCNNPIIYRATEQWFASIDGFRKAALEEIDKVQWIPSWGKDRIYNMIADRGDWCISRQRTWGVPIPIFYCEDCGKEIISDETIAKVQEIFREEGSDAWFLRPAAELLPEGFTCACGGKSFRKETDIMDVWFDSGTSHTSVLMERKELAWPADLYMEGSDQHRGWFNSSLSTSVAAYGKAPYKAVLTHGFLVDEKGRKMSKSLGNGVDPLQVTKEMGADILRLWVCAADYKNDVAVSPRIMKQMSEAYRKIRNTLRFLLSNLNDFDPAKDRVAYKDLPEIDRWALLQLGKVTQRVLQGYEKYEFHWVYHSVHNFCAVELSAIYLDIVKDRLYVEGKNSTLRRASQTVLYDVLNALVRLMAPVLTYTADEIWPYVPGVPAGSHVQTEEMPEALPQWLDEALEKKWDTLLAVRSEVTKALEKARQDKLINHPLTAQVDLYPNAELEGFLRGIPNLSEIFIVSAVQLHSAGEEKPEGLSMAEDLAGFGIAVNSAAGEKCERCWIYDTGVGENQEHPTLCPRCASVVSHL.

The short motif at 57–67 (PYANGDIHLGH) is the 'HIGH' region element. Position 553 (Glu553) interacts with L-isoleucyl-5'-AMP. Positions 594-598 (KMSKS) match the 'KMSKS' region motif. Lys597 provides a ligand contact to ATP. Cys892, Cys895, Cys912, and Cys915 together coordinate Zn(2+).

It belongs to the class-I aminoacyl-tRNA synthetase family. IleS type 1 subfamily. As to quaternary structure, monomer. The cofactor is Zn(2+).

It localises to the cytoplasm. It carries out the reaction tRNA(Ile) + L-isoleucine + ATP = L-isoleucyl-tRNA(Ile) + AMP + diphosphate. Its function is as follows. Catalyzes the attachment of isoleucine to tRNA(Ile). As IleRS can inadvertently accommodate and process structurally similar amino acids such as valine, to avoid such errors it has two additional distinct tRNA(Ile)-dependent editing activities. One activity is designated as 'pretransfer' editing and involves the hydrolysis of activated Val-AMP. The other activity is designated 'posttransfer' editing and involves deacylation of mischarged Val-tRNA(Ile). This is Isoleucine--tRNA ligase from Desulfitobacterium hafniense (strain DSM 10664 / DCB-2).